A 222-amino-acid chain; its full sequence is Peptide methionine sulfoxide reductase MsrA (222 aa).

Cys60 is a catalytic residue.

It belongs to the MsrA Met sulfoxide reductase family.

The enzyme catalyses L-methionyl-[protein] + [thioredoxin]-disulfide + H2O = L-methionyl-(S)-S-oxide-[protein] + [thioredoxin]-dithiol. The catalysed reaction is [thioredoxin]-disulfide + L-methionine + H2O = L-methionine (S)-S-oxide + [thioredoxin]-dithiol. In terms of biological role, has an important function as a repair enzyme for proteins that have been inactivated by oxidation. Catalyzes the reversible oxidation-reduction of methionine sulfoxide in proteins to methionine. The chain is Peptide methionine sulfoxide reductase MsrA from Pseudomonas putida (strain ATCC 47054 / DSM 6125 / CFBP 8728 / NCIMB 11950 / KT2440).